The chain runs to 324 residues: MTTTLITHIINPLAYIVPVLLAVAFLTLLERKVLGYMQLRKGPNIVGPYGLLQPIADGLKLFIKEPVRPSTSSPFLFLATPMLALTLALTLWAPMPIPYPITDLNLGVLFVLALSSLAVYSILGSGWASNSKYALIGALRAVAQTISYEVSLGLILLSVIIFTGGFTLQTFNVAQESIWLLVPAWPLAAMWYISTLAETNRAPFDLTEGESELVSGFNVEYAGGPFALFFLAEYANILLMNTLSAILFLGASHIPAFPELTAVNLMTKAALLSVVFLWVRASYPRFRYDQLMHLVWKSFLPLTLALVLWHLALPTAMAGLPPQL.

Transmembrane regions (helical) follow at residues 9-29 (IINPLAYIVPVLLAVAFLTLL), 43-63 (PNIVGPYGLLQPIADGLKLFI), 75-95 (FLFLATPMLALTLALTLWAPM), 106-126 (LGVLFVLALSSLAVYSILGSG), 146-166 (ISYEVSLGLILLSVIIFTGGF), 177-197 (SIWLLVPAWPLAAMWYISTLA), 237-257 (ILLMNTLSAILFLGASHIPAF), 259-279 (ELTAVNLMTKAALLSVVFLWV), and 299-319 (FLPLTLALVLWHLALPTAMAG).

The protein belongs to the complex I subunit 1 family.

The protein resides in the mitochondrion inner membrane. It catalyses the reaction a ubiquinone + NADH + 5 H(+)(in) = a ubiquinol + NAD(+) + 4 H(+)(out). In terms of biological role, core subunit of the mitochondrial membrane respiratory chain NADH dehydrogenase (Complex I) that is believed to belong to the minimal assembly required for catalysis. Complex I functions in the transfer of electrons from NADH to the respiratory chain. The immediate electron acceptor for the enzyme is believed to be ubiquinone. The chain is NADH-ubiquinone oxidoreductase chain 1 (MT-ND1) from Salmo salar (Atlantic salmon).